Consider the following 1551-residue polypeptide: UDP-glucose:glycoprotein glucosyltransferase 1 (1551 aa).

The signal sequence occupies residues 1-42; sequence MCSRGDANTADAAAARRVTGLRYNMRLLIALALPCLFSLAEA. Asn269, Asn536, and Asn1228 each carry an N-linked (GlcNAc...) asparagine glycan. The glucosyltransferase stretch occupies residues 1244–1551; it reads KAEEVKQDKD…QEGSQKHEEL (308 aa). Ser1277 is subject to Phosphoserine. The disordered stretch occupies residues 1531–1551; sequence KELGTLHTEETQEGSQKHEEL. The Prevents secretion from ER motif lies at 1548-1551; that stretch reads HEEL.

The protein belongs to the glycosyltransferase 8 family. In terms of assembly, monomer as well as in a tight complex with SELENOF. Interacts with METTL23. Part of a large chaperone multiprotein complex comprising DNAJB11, HSP90B1, HSPA5, HYOU, PDIA2, PDIA4, PDIA6, PPIB, SDF2L1, UGGT1 and very small amounts of ERP29, but not, or at very low levels, CALR nor CANX. Requires Ca(2+) as cofactor. The cofactor is Mn(2+).

The protein resides in the endoplasmic reticulum lumen. The protein localises to the endoplasmic reticulum-Golgi intermediate compartment. The catalysed reaction is N(4)-(alpha-D-Man-(1-&gt;2)-alpha-D-Man-(1-&gt;2)-alpha-D-Man-(1-&gt;3)-[alpha-D-Man-(1-&gt;2)-alpha-D-Man-(1-&gt;3)-[alpha-D-Man-(1-&gt;2)-alpha-D-Man-(1-&gt;6)]-alpha-D-Man-(1-&gt;6)]-beta-D-Man-(1-&gt;4)-beta-D-GlcNAc-(1-&gt;4)-beta-D-GlcNAc)-L-asparaginyl-[protein] (N-glucan mannose isomer 9A1,2,3B1,2,3) + UDP-alpha-D-glucose = N(4)-(alpha-D-Glc-(1-&gt;3)-alpha-D-Man-(1-&gt;2)-alpha-D-Man-(1-&gt;2)-alpha-D-Man-(1-&gt;3)-[alpha-D-Man-(1-&gt;2)-alpha-D-Man-(1-&gt;3)-[alpha-D-Man-(1-&gt;2)-alpha-D-Man-(1-&gt;6)]-alpha-D-Man-(1-&gt;6)]-beta-D-Man-(1-&gt;4)-beta-D-GlcNAc-(1-&gt;4)-beta-D-GlcNAc)-L-asparaginyl-[protein] + UDP + H(+). The protein operates within protein modification; protein glycosylation. Its function is as follows. Recognizes glycoproteins with minor folding defects. Reglucosylates single N-glycans near the misfolded part of the protein, thus providing quality control for protein folding in the endoplasmic reticulum. Reglucosylated proteins are recognized by calreticulin for recycling to the endoplasmic reticulum and refolding or degradation. In Mus musculus (Mouse), this protein is UDP-glucose:glycoprotein glucosyltransferase 1 (Uggt1).